The chain runs to 243 residues: Probable transcriptional regulatory protein BRE_29 (243 aa).

Belongs to the TACO1 family.

Its subcellular location is the cytoplasm. The protein is Probable transcriptional regulatory protein BRE_29 of Borrelia recurrentis (strain A1).